Consider the following 292-residue polypeptide: Ribosomal protein L11 methyltransferase (292 aa).

Residues T145, G166, D188, and N229 each coordinate S-adenosyl-L-methionine.

It belongs to the methyltransferase superfamily. PrmA family.

The protein resides in the cytoplasm. The catalysed reaction is L-lysyl-[protein] + 3 S-adenosyl-L-methionine = N(6),N(6),N(6)-trimethyl-L-lysyl-[protein] + 3 S-adenosyl-L-homocysteine + 3 H(+). In terms of biological role, methylates ribosomal protein L11. In Pseudoalteromonas atlantica (strain T6c / ATCC BAA-1087), this protein is Ribosomal protein L11 methyltransferase.